The sequence spans 293 residues: Putative ABC transporter ATP-binding protein AF_0731 (293 aa).

Positions 2 to 236 (IEAVDLHFCY…RKLGIRSFSL (235 aa)) constitute an ABC transporter domain. Residue 34-41 (GRNGAGKT) coordinates ATP.

Belongs to the ABC transporter superfamily.

The protein localises to the cell membrane. Probably part of an ABC transporter complex. Responsible for energy coupling to the transport system. The protein is Putative ABC transporter ATP-binding protein AF_0731 of Archaeoglobus fulgidus (strain ATCC 49558 / DSM 4304 / JCM 9628 / NBRC 100126 / VC-16).